The chain runs to 158 residues: MIRIGHGFDVHAFGEDRPLIIGGVEVPYHTGFIAHSDGDVALHALTDAILGAAALGDIGKLFPDTDMQYKNADSRGLLREAFRQVQEKGYKIGNVDITIIAQAPKMRPHIDAMRAKIAEDIQCDIEQVNVKATTTEKLGFTGRQEGIACEAVALLIRQ.

A divalent metal cation contacts are provided by Asp9 and His11. 4-CDP-2-C-methyl-D-erythritol 2-phosphate contacts are provided by residues 9-11 and 35-36; these read DVH and HS. Residue His43 coordinates a divalent metal cation. 4-CDP-2-C-methyl-D-erythritol 2-phosphate-binding positions include 57-59, 62-66, 133-136, Phe140, and Arg143; these read DIG, FPDTD, and TTTE.

The protein belongs to the IspF family. As to quaternary structure, homotrimer. The cofactor is a divalent metal cation.

It catalyses the reaction 4-CDP-2-C-methyl-D-erythritol 2-phosphate = 2-C-methyl-D-erythritol 2,4-cyclic diphosphate + CMP. Its pathway is isoprenoid biosynthesis; isopentenyl diphosphate biosynthesis via DXP pathway; isopentenyl diphosphate from 1-deoxy-D-xylulose 5-phosphate: step 4/6. In terms of biological role, involved in the biosynthesis of isopentenyl diphosphate (IPP) and dimethylallyl diphosphate (DMAPP), two major building blocks of isoprenoid compounds. Catalyzes the conversion of 4-diphosphocytidyl-2-C-methyl-D-erythritol 2-phosphate (CDP-ME2P) to 2-C-methyl-D-erythritol 2,4-cyclodiphosphate (ME-CPP) with a corresponding release of cytidine 5-monophosphate (CMP). In Haemophilus influenzae (strain PittGG), this protein is 2-C-methyl-D-erythritol 2,4-cyclodiphosphate synthase.